Reading from the N-terminus, the 140-residue chain is Histone H3-like protein (140 aa).

A disordered region spans residues 1–36; it reads MSRTKQTASKALGGKAPRKGISAKSIPSSGCSPAMP. The residue at position 5 (K5) is an N6,N6,N6-trimethyllysine; alternate. K5 carries the N6,N6-dimethyllysine; alternate modification. 2 positions are modified to N6-methyllysine; alternate: K5 and K10. Residues K10, K15, K19, and K24 each carry the N6-acetyllysine; alternate modification. K15 carries the N6,N6-dimethyllysine; alternate modification. An N6-methyllysine; alternate mark is found at K19 and K24. An N6-acetyllysine mark is found at K56 and K64.

It belongs to the histone H3 family. In terms of assembly, the nucleosome is a histone octamer containing two molecules each of H2A, H2B, H3 and H4 assembled in one H3-H4 heterotetramer and two H2A-H2B heterodimers. The octamer wraps approximately 147 bp of DNA. Mono-, di- and trimethylated to form H3K4me1/2/3. H3K4me activates gene expression by regulating transcription elongation and plays a role in telomere length maintenance. H3K4me enrichment correlates with transcription levels, and occurs in a 5' to 3' gradient with H3K4me3 enrichment at the 5'-end of genes, shifting to H3K4me2 and then H3K4me1. Post-translationally, acetylation of histone H3 leads to transcriptional activation.

It localises to the nucleus. Its subcellular location is the chromosome. Its function is as follows. Core component of nucleosome. Nucleosomes wrap and compact DNA into chromatin, limiting DNA accessibility to the cellular machineries which require DNA as a template. Histones thereby play a central role in transcription regulation, DNA repair, DNA replication and chromosomal stability. DNA accessibility is regulated via a complex set of post-translational modifications of histones, also called histone code, and nucleosome remodeling. The sequence is that of Histone H3-like protein from Encephalitozoon cuniculi (strain GB-M1) (Microsporidian parasite).